The primary structure comprises 323 residues: Fructose-1,6-bisphosphatase class 1 (323 aa).

Mg(2+) contacts are provided by Glu-88, Asp-107, Leu-109, and Asp-110. Residues 110 to 113 and Asn-200 each bind substrate; that span reads DGSS. Mg(2+) is bound at residue Glu-272.

It belongs to the FBPase class 1 family. Homotetramer. Mg(2+) is required as a cofactor.

The protein localises to the cytoplasm. The enzyme catalyses beta-D-fructose 1,6-bisphosphate + H2O = beta-D-fructose 6-phosphate + phosphate. It functions in the pathway carbohydrate biosynthesis; gluconeogenesis. The sequence is that of Fructose-1,6-bisphosphatase class 1 from Acinetobacter baumannii (strain ACICU).